The sequence spans 152 residues: 6,7-dimethyl-8-ribityllumazine synthase (152 aa).

5-amino-6-(D-ribitylamino)uracil-binding positions include Phe21, 55–57 (AFE), and 79–81 (CVI). A (2S)-2-hydroxy-3-oxobutyl phosphate-binding site is contributed by 84 to 85 (ST). His87 acts as the Proton donor in catalysis. Phe112 serves as a coordination point for 5-amino-6-(D-ribitylamino)uracil. Residue Arg126 coordinates (2S)-2-hydroxy-3-oxobutyl phosphate.

Belongs to the DMRL synthase family. As to quaternary structure, forms an icosahedral capsid composed of 60 subunits, arranged as a dodecamer of pentamers.

It carries out the reaction (2S)-2-hydroxy-3-oxobutyl phosphate + 5-amino-6-(D-ribitylamino)uracil = 6,7-dimethyl-8-(1-D-ribityl)lumazine + phosphate + 2 H2O + H(+). The protein operates within cofactor biosynthesis; riboflavin biosynthesis; riboflavin from 2-hydroxy-3-oxobutyl phosphate and 5-amino-6-(D-ribitylamino)uracil: step 1/2. In terms of biological role, catalyzes the formation of 6,7-dimethyl-8-ribityllumazine by condensation of 5-amino-6-(D-ribitylamino)uracil with 3,4-dihydroxy-2-butanone 4-phosphate. This is the penultimate step in the biosynthesis of riboflavin. In Staphylococcus saprophyticus subsp. saprophyticus (strain ATCC 15305 / DSM 20229 / NCIMB 8711 / NCTC 7292 / S-41), this protein is 6,7-dimethyl-8-ribityllumazine synthase.